The chain runs to 223 residues: Serine/threonine/tyrosine-interacting protein (223 aa).

The region spanning 28-176 is the Tyrosine-protein phosphatase domain; it reads EMQEILPGLF…LQEYEAIYLA (149 aa). The Interaction with FBXW7 motif lies at 76–78; that stretch reads FQQ. Phosphoserine occurs at positions 184, 193, and 201. The disordered stretch occupies residues 197–223; the sequence is GTTGSLKRTHEEEDDFGTMQVATAQNG.

This sequence belongs to the protein-tyrosine phosphatase family. Non-receptor class subfamily. As to quaternary structure, interacts with MAPK1; independently of MAPK1 phosphorylation status. Interacts with CARHSP1/Crhsp-24. Interacts (via FQQ motif) with FBXW7 isoforms 1 (via F-box domain) and 3 (via F-box domain); the interaction is direct and prevents FBXW7 interaction with SKP1, a component of the SCF(FBXW7) complex. Does not interact with FBXW7 isoform 2.

The protein localises to the nucleus. It is found in the cytoplasm. Its subcellular location is the cytosol. Catalytically inactive phosphatase. Acts as a nuclear anchor for MAPK1/MAPK3 (ERK1/ERK2). Modulates cell-fate decisions and cell migration by spatiotemporal regulation of MAPK1/MAPK3 (ERK1/ERK2). By binding to the F-box of FBXW7, prevents the assembly of FBXW7 into the SCF E3 ubiquitin-protein ligase complex, and thereby inhibits degradation of its substrates. Plays a role in spermatogenesis. This Homo sapiens (Human) protein is Serine/threonine/tyrosine-interacting protein.